A 206-amino-acid chain; its full sequence is Small ribosomal subunit protein uS4 (206 aa).

One can recognise an S4 RNA-binding domain in the interval 96-156 (GRLDNVVYRM…EKAKKQSRVK (61 aa)).

Belongs to the universal ribosomal protein uS4 family. As to quaternary structure, part of the 30S ribosomal subunit. Contacts protein S5. The interaction surface between S4 and S5 is involved in control of translational fidelity.

One of the primary rRNA binding proteins, it binds directly to 16S rRNA where it nucleates assembly of the body of the 30S subunit. Its function is as follows. With S5 and S12 plays an important role in translational accuracy. The sequence is that of Small ribosomal subunit protein uS4 from Serratia proteamaculans (strain 568).